A 231-amino-acid polypeptide reads, in one-letter code: NADH-ubiquinone oxidoreductase chain 4 (231 aa).

7 helical membrane passes run 1–21 (PIAG…YGMI), 34–54 (MFIP…LTCL), 62–82 (LIAY…SIQT), 86–106 (LSGA…LFCL), 118–138 (ILIL…WWLL), 169–189 (TIIL…HIFL), and 211–231 (LLMT…ELVM).

Belongs to the complex I subunit 4 family.

Its subcellular location is the mitochondrion membrane. The catalysed reaction is a ubiquinone + NADH + 5 H(+)(in) = a ubiquinol + NAD(+) + 4 H(+)(out). Its function is as follows. Core subunit of the mitochondrial membrane respiratory chain NADH dehydrogenase (Complex I) that is believed to belong to the minimal assembly required for catalysis. Complex I functions in the transfer of electrons from NADH to the respiratory chain. The immediate electron acceptor for the enzyme is believed to be ubiquinone. This Causus rhombeatus (Rhombic night adder) protein is NADH-ubiquinone oxidoreductase chain 4 (MT-ND4).